Consider the following 295-residue polypeptide: Protoheme IX farnesyltransferase (295 aa).

A run of 9 helical transmembrane segments spans residues 8-28 (VTKP…FLLA), 35-55 (YTLF…GCVF), 84-104 (VSLV…WFGA), 107-127 (LACW…SLYM), 132-152 (VYGT…GYCA), 162-182 (LILL…IAIF), 208-228 (ITLY…GGYA), 233-253 (LVVA…GYKV), and 264-284 (FVFS…DFMV).

The protein belongs to the UbiA prenyltransferase family. Protoheme IX farnesyltransferase subfamily.

The protein resides in the cell inner membrane. It carries out the reaction heme b + (2E,6E)-farnesyl diphosphate + H2O = Fe(II)-heme o + diphosphate. The protein operates within porphyrin-containing compound metabolism; heme O biosynthesis; heme O from protoheme: step 1/1. Its function is as follows. Converts heme B (protoheme IX) to heme O by substitution of the vinyl group on carbon 2 of heme B porphyrin ring with a hydroxyethyl farnesyl side group. The chain is Protoheme IX farnesyltransferase from Enterobacter sp. (strain 638).